Here is a 383-residue protein sequence, read N- to C-terminus: F-box/kelch-repeat protein At1g16250 (383 aa).

Residues Ser-7–Arg-54 form the F-box domain. 5 Kelch repeats span residues Cys-50–Cys-103, Cys-109–Gly-165, Lys-166–Gly-214, Phe-216–Asn-263, and Glu-318–Leu-377.

The protein is F-box/kelch-repeat protein At1g16250 of Arabidopsis thaliana (Mouse-ear cress).